The primary structure comprises 392 residues: Mitochondrial distribution and morphology protein 10 (392 aa).

The protein belongs to the MDM10 family. In terms of assembly, component of the ER-mitochondria encounter structure (ERMES) or MDM complex, composed of MMM1, MDM10, MDM12 and MDM34. Associates with the mitochondrial outer membrane sorting assembly machinery SAM(core) complex.

It localises to the mitochondrion outer membrane. Its function is as follows. Component of the ERMES/MDM complex, which serves as a molecular tether to connect the endoplasmic reticulum and mitochondria. Components of this complex are involved in the control of mitochondrial shape and protein biogenesis and may function in phospholipid exchange. MDM10 is involved in the late assembly steps of the general translocase of the mitochondrial outer membrane (TOM complex). Functions in the TOM40-specific route of the assembly of outer membrane beta-barrel proteins, including the association of TOM40 with the receptor TOM22 and small TOM proteins. Can associate with the SAM(core) complex as well as the MDM12-MMM1 complex, both involved in late steps of the major beta-barrel assembly pathway, that is responsible for biogenesis of all outer membrane beta-barrel proteins. May act as a switch that shuttles between both complexes and channels precursor proteins into the TOM40-specific pathway. Plays a role in mitochondrial morphology and in the inheritance of mitochondria. In Phaeosphaeria nodorum (strain SN15 / ATCC MYA-4574 / FGSC 10173) (Glume blotch fungus), this protein is Mitochondrial distribution and morphology protein 10.